A 297-amino-acid polypeptide reads, in one-letter code: 3-mercaptopyruvate sulfurtransferase (297 aa).

Ala2 is modified (N-acetylalanine). Residues 25-144 enclose the Rhodanese 1 domain; that stretch reads ASQPLKLLDA…WLSQNLPISS (120 aa). Ser35 is modified (phosphoserine). Lys40 carries the post-translational modification N6-acetyllysine; alternate. Position 40 is an N6-succinyllysine; alternate (Lys40). A hinge region spans residues 145-160; the sequence is GKSPSEPAEFCAQLDP. 2 positions are modified to N6-succinyllysine: Lys146 and Lys164. In terms of domain architecture, Rhodanese 2 spans 174–288; sequence DARRFQVVDA…WYMRAQPEHV (115 aa). Residue Arg188 participates in substrate binding. Cys248 acts as the Cysteine persulfide intermediate in catalysis.

Monomer (active form). Homodimer; disulfide-linked (inactive form). In terms of processing, the N-terminus is blocked. In terms of tissue distribution, expressed in liver, heart, kidney and brain. Localizes to tubular epithelium in the kidney, pericentral hepatocytes in the liver, cardiac cells in the heart and neuroglial cells in the brain. Also expressed in vascular endothelium of the thoracic aorta. Weak expression in lung and thymus.

Its subcellular location is the cytoplasm. It localises to the mitochondrion. The protein localises to the synapse. It is found in the synaptosome. It catalyses the reaction 2-oxo-3-sulfanylpropanoate + [thioredoxin]-dithiol = [thioredoxin]-disulfide + hydrogen sulfide + pyruvate + H(+). Its activity is regulated as follows. By oxidative stress, and thioredoxin. Under oxidative stress conditions, the catalytic cysteine site is converted to a sulfenate which inhibits the MPST enzyme activity. Reduced thioredoxin cleaves an intersubunit disulfide bond to turn on the redox switch and reactivate the enzyme. Inhibited by different oxidants, hydrogen peroxide and tetrathionate. Functionally, transfer of a sulfur ion to cyanide or to other thiol compounds. Also has weak rhodanese activity. Detoxifies cyanide and is required for thiosulfate biosynthesis. Acts as an antioxidant. In combination with cysteine aminotransferase (CAT), contributes to the catabolism of cysteine and is an important producer of hydrogen sulfide in the brain, retina and vascular endothelial cells. Hydrogen sulfide H(2)S is an important synaptic modulator, signaling molecule, smooth muscle contractor and neuroprotectant. Its production by the 3MST/CAT pathway is regulated by calcium ions. The sequence is that of 3-mercaptopyruvate sulfurtransferase (Mpst) from Rattus norvegicus (Rat).